The following is a 286-amino-acid chain: Probable xyloglucan endotransglucosylase/hydrolase protein 23 (286 aa).

The signal sequence occupies residues 1–24 (MAMISYSTIVVALLASFMICSVSA). Residues 25-214 (NFQRDVEITW…WSKAPFTASY (190 aa)) form the GH16 domain. Catalysis depends on E100, which acts as the Nucleophile. E104 (proton donor) is an active-site residue. Residue E104 participates in xyloglucan binding. N-linked (GlcNAc...) asparagine glycosylation is present at N108. Xyloglucan-binding positions include 117 to 119 (HTN), 127 to 129 (DRE), 193 to 194 (EW), and G198. C222 and C231 are joined by a disulfide. The N-linked (GlcNAc...) asparagine glycan is linked to N233. A disulfide bridge links C269 with C283. A xyloglucan-binding site is contributed by R274.

The protein belongs to the glycosyl hydrolase 16 family. XTH group 2 subfamily. Contains at least one intrachain disulfide bond essential for its enzymatic activity.

It localises to the secreted. It is found in the cell wall. The protein resides in the extracellular space. The protein localises to the apoplast. The enzyme catalyses breaks a beta-(1-&gt;4) bond in the backbone of a xyloglucan and transfers the xyloglucanyl segment on to O-4 of the non-reducing terminal glucose residue of an acceptor, which can be a xyloglucan or an oligosaccharide of xyloglucan.. Its function is as follows. Catalyzes xyloglucan endohydrolysis (XEH) and/or endotransglycosylation (XET). Cleaves and religates xyloglucan polymers, an essential constituent of the primary cell wall, and thereby participates in cell wall construction of growing tissues. The sequence is that of Probable xyloglucan endotransglucosylase/hydrolase protein 23 (XTH23) from Arabidopsis thaliana (Mouse-ear cress).